A 517-amino-acid polypeptide reads, in one-letter code: 2,3-bisphosphoglycerate-independent phosphoglycerate mutase (517 aa).

Aspartate 14 and serine 64 together coordinate Mn(2+). Serine 64 (phosphoserine intermediate) is an active-site residue. Substrate-binding positions include histidine 125, 155 to 156 (RD), arginine 187, arginine 193, 259 to 262 (RPDR), and lysine 334. Mn(2+) contacts are provided by aspartate 401, histidine 405, aspartate 442, histidine 443, and histidine 461.

It belongs to the BPG-independent phosphoglycerate mutase family. Monomer. The cofactor is Mn(2+).

It catalyses the reaction (2R)-2-phosphoglycerate = (2R)-3-phosphoglycerate. It functions in the pathway carbohydrate degradation; glycolysis; pyruvate from D-glyceraldehyde 3-phosphate: step 3/5. Its function is as follows. Catalyzes the interconversion of 2-phosphoglycerate and 3-phosphoglycerate. The sequence is that of 2,3-bisphosphoglycerate-independent phosphoglycerate mutase from Symbiobacterium thermophilum (strain DSM 24528 / JCM 14929 / IAM 14863 / T).